Here is a 333-residue protein sequence, read N- to C-terminus: Adenosine deaminase (333 aa).

Zn(2+) is bound by residues His12 and His14. The substrate site is built by His14, Asp16, and Gly170. Residue His197 participates in Zn(2+) binding. Glu200 acts as the Proton donor in catalysis. Residue Asp278 participates in Zn(2+) binding. Asp279 lines the substrate pocket.

It belongs to the metallo-dependent hydrolases superfamily. Adenosine and AMP deaminases family. Adenosine deaminase subfamily. The cofactor is Zn(2+).

The catalysed reaction is adenosine + H2O + H(+) = inosine + NH4(+). It carries out the reaction 2'-deoxyadenosine + H2O + H(+) = 2'-deoxyinosine + NH4(+). Its function is as follows. Catalyzes the hydrolytic deamination of adenosine and 2-deoxyadenosine. This is Adenosine deaminase from Escherichia coli O81 (strain ED1a).